The sequence spans 177 residues: Baseplate hub assembly protein gp28 (177 aa).

In terms of assembly, the gp27 and gp28 proteins seem to combine to form a small hub precursor during morphogenesis.

Its function is as follows. Baseplate hub assembly chaperone involved in the tail assembly. This Enterobacteria phage T4 (Bacteriophage T4) protein is Baseplate hub assembly protein gp28 (28).